The primary structure comprises 166 residues: Large ribosomal subunit protein uL10 (166 aa).

This sequence belongs to the universal ribosomal protein uL10 family. As to quaternary structure, part of the ribosomal stalk of the 50S ribosomal subunit. The N-terminus interacts with L11 and the large rRNA to form the base of the stalk. The C-terminus forms an elongated spine to which L12 dimers bind in a sequential fashion forming a multimeric L10(L12)X complex.

Its function is as follows. Forms part of the ribosomal stalk, playing a central role in the interaction of the ribosome with GTP-bound translation factors. This is Large ribosomal subunit protein uL10 from Staphylococcus aureus (strain JH1).